A 334-amino-acid polypeptide reads, in one-letter code: Short-chain dehydrogenase/reductase (334 aa).

NADP(+) contacts are provided by Leu44, Lys68, Asp93, Asn120, and Lys152. Active-site proton donor residues include Ser176 and Tyr205. Tyr205, Lys209, and Asn239 together coordinate NADP(+). Lys209 functions as the Lowers pKa of active site Tyr in the catalytic mechanism.

The protein belongs to the short-chain dehydrogenases/reductases (SDR) family.

The protein operates within mycotoxin biosynthesis. In terms of biological role, short-chain dehydrogenase/reductase; part of the 2 gene clusters that mediate the biosynthesis of fusicoccins, diterpene glucosides that display phytohormone-like activity and function as potent activators of plasma membrane H(+)-ATPases in plants by modifying 14-3-3 proteins and cause the plant disease constriction canker. The first step in the pathway is performed by the fusicoccadiene synthase PaFS that possesses both prenyl transferase and terpene cyclase activity, converting isopentenyl diphosphate and dimethylallyl diphosphate into geranylgeranyl diphosphate (GGDP) and successively converting GGDP into fusicocca-2,10(14)-diene, a precursor for fusicoccin H. The second step is the oxidation at the C-8 position by the cytochrome P450 monooxygenase PaP450-2 to yield fusicocca-2,10(14)-diene-8-beta-ol. The cytochrome P450 monooxygenase PaP450-1 then catalyzes the hydroxylation at the C-16 position to produce fusicocca-2,10(14)-diene-8-beta,16-diol. The dioxygenase fc-dox then catalyzes the 16-oxydation of fusicocca-2,10(14)-diene-8-beta,16-diol to yield an aldehyde (8-beta-hydroxyfusicocca-1,10(14)-dien-16-al). The short-chain dehydrogenase/reductase fc-sdr catalyzes the reduction of the aldehyde to yield fusicocca-1,10(14)-diene-8-beta,16-diol. The next step is the hydroxylation at C-9 performed by the cytochrome P450 monooxygenase PaP450-3 that leads to fusicoccin H aglycon which is glycosylated to fusicoccin H by the O-glycosyltransferase PaGT. Hydroxylation at C-12 by the cytochrome P450 monooxygenase PaP450-4 leads then to the production of fusicoccin Q and is followed by methylation by the O-methyltransferase PaMT to yield fusicoccin P. Fusicoccin P is further converted to fusicoccin J via prenylation by the O-glucose prenyltransferase PaPT. Cytochrome P450 monooxygenase PaP450-5 then performs hydroxylation at C-19 to yield dideacetyl-fusicoccin A which is acetylated to 3'-O-deacetyl-fusicoccin A by the O-acetyltransferase PaAT-2. Finally, a another acetylation by the O-acetyltransferase PaAT-1 yields fusicoccin A. The chain is Short-chain dehydrogenase/reductase from Phomopsis amygdali (Fusicoccum amygdali).